A 117-amino-acid polypeptide reads, in one-letter code: MKHRVDGRKLGRKTEARIALLRTLSKQLVIHGEVETTLPKAKELKRFADKLVTHAKSKELHDIRLVEKHLGDRELVKKLTDEIAPRFAEVNGGYTTVLKTGFRKGDGAPTAIVRWSK.

This sequence belongs to the bacterial ribosomal protein bL17 family. Part of the 50S ribosomal subunit. Contacts protein L32.

This Coprothermobacter proteolyticus (strain ATCC 35245 / DSM 5265 / OCM 4 / BT) protein is Large ribosomal subunit protein bL17.